Consider the following 132-residue polypeptide: Small ribosomal subunit protein uS11 (132 aa).

A disordered region spans residues 113-132 (VTPIPHDGTRAPGGKRGRRV).

It belongs to the universal ribosomal protein uS11 family. Part of the 30S ribosomal subunit.

Functionally, located on the platform of the 30S subunit. This chain is Small ribosomal subunit protein uS11, found in Methanocella arvoryzae (strain DSM 22066 / NBRC 105507 / MRE50).